Here is a 435-residue protein sequence, read N- to C-terminus: 5-hydroxybenzimidazole synthase (435 aa).

Substrate-binding positions include Met-95, Tyr-124, His-163, 186–188 (SKG), 227–230 (NGLR), and Glu-266. His-270 provides a ligand contact to Zn(2+). A substrate-binding site is contributed by Tyr-293. His-334 is a Zn(2+) binding site. Residues Cys-410, Cys-413, and Cys-417 each contribute to the [4Fe-4S] cluster site.

The protein belongs to the ThiC family. 5-hydroxybenzimidazole synthase subfamily. Homodimer. Requires [4Fe-4S] cluster as cofactor.

The catalysed reaction is 5-amino-1-(5-phospho-beta-D-ribosyl)imidazole + AH2 + S-adenosyl-L-methionine = 5-hydroxybenzimidazole + 5'-deoxyadenosine + formate + L-methionine + A + NH4(+) + phosphate + 2 H(+). It functions in the pathway cofactor biosynthesis; adenosylcobalamin biosynthesis. Catalyzes the complex conversion of aminoimidazole ribotide (AIR) to 5-hydroxybenzimidazole (5-HBI) in a radical S-adenosyl-L-methionine (SAM)-dependent reaction. Is thus involved in the anaerobic biosynthesis of dimethylbenzimidazole (DMB), the lower axial ligand of vitamin B12 (cobalamin). This chain is 5-hydroxybenzimidazole synthase, found in Desulfuromonas acetoxidans (strain DSM 684 / 11070).